An 807-amino-acid chain; its full sequence is Serine/threonine-protein kinase B-raf (807 aa).

2 stretches are compositionally biased toward low complexity: residues 1–15 (MAALSSGSSAEGASL) and 110–128 (SVSSSASTDTVASSSSSSL). Disordered regions lie at residues 1–36 (MAALSSGSSAEGASLFNGDMEPEPPPPVLGACYAGS) and 104–128 (GNGTDFSVSSSASTDTVASSSSSSL). One can recognise an RBD domain in the interval 155–227 (PIVRVFLPNK…TGEELHVEVL (73 aa)). The segment at 234–280 (THNFVRKTFFTLAFCDFCRKLLFQGFRCQTCGYKFHQRCSTEVPLMC) adopts a Phorbol-ester/DAG-type zinc-finger fold. Zn(2+)-binding residues include His235, Cys248, Cys251, Cys261, Cys264, His269, Cys272, and Cys280. A compositionally biased stretch (polar residues) spans 303–313 (EETTLGETTPA). Disordered stretches follow at residues 303–372 (EETT…VHIN) and 434–494 (STAG…EIPD). Low complexity predominate over residues 314 to 328 (SGSYPSVPPSDSVGP). Composition is skewed to basic and acidic residues over residues 348-363 (PADEDHRNQFGQRDRS) and 463-487 (QRERKSSSSSEDRNRMKTLGRRDSS). The Protein kinase domain occupies 497-757 (ITVGQRIGSG…PQILASIELL (261 aa)). Residues 503–511 (IGSGSFGTV) and Lys523 contribute to the ATP site. Asp616 functions as the Proton acceptor in the catalytic mechanism. Ser790 is modified (phosphoserine; by MAPK1). At Thr793 the chain carries Phosphothreonine; by MAPK1.

The protein belongs to the protein kinase superfamily. TKL Ser/Thr protein kinase family. RAF subfamily. Zn(2+) serves as cofactor. In terms of processing, phosphorylated. As to expression, expressed preferentially in neural tissue.

It localises to the nucleus. Its subcellular location is the cytoplasm. The protein resides in the cell membrane. It catalyses the reaction L-seryl-[protein] + ATP = O-phospho-L-seryl-[protein] + ADP + H(+). It carries out the reaction L-threonyl-[protein] + ATP = O-phospho-L-threonyl-[protein] + ADP + H(+). Its activity is regulated as follows. In quiescent cells, maintained in an inactive state via an intramolecular interaction between the protein kinase and N-terminal domains. Following mitogen-mediated cell activation, binds via its RGB domain to active HRAS (GTP-bound) which releases the inhibitory intramolecular interaction between the two domains. This allows the MAP2K1-mediated dimerization of KSR1 or KSR2, and BRAF which activates BRAF. Functionally, protein kinase involved in the activation of the MAP signaling cascade. May play a role in transducing specific signals in neural cells. This Coturnix japonica (Japanese quail) protein is Serine/threonine-protein kinase B-raf.